A 263-amino-acid chain; its full sequence is Receptor-transporting protein 1 (263 aa).

The Cytoplasmic segment spans residues 1–238 (MRIFRPWRLR…QTGSGWNFCS (238 aa)). The 3CxxC-type zinc finger occupies 88–197 (ASGRFHCSWC…GEFCEACQEG (110 aa)). Residues 239 to 259 (IPWCLFWATVLLLIIYLQFSF) form a helical membrane-spanning segment. The Extracellular segment spans residues 260 to 263 (RSSV).

The protein belongs to the TMEM7 family. In terms of assembly, interacts with olfactory receptors. As to expression, expressed in testis.

It localises to the cell membrane. Functionally, specifically promotes functional cell surface expression of olfactory receptors, but not of other GPCRs. The polypeptide is Receptor-transporting protein 1 (RTP1) (Homo sapiens (Human)).